Here is a 387-residue protein sequence, read N- to C-terminus: S-adenosylmethionine synthase (387 aa).

H17 is an ATP binding site. Mg(2+) is bound at residue D19. A K(+)-binding site is contributed by E45. L-methionine is bound by residues E58 and Q101. Positions Q101 to A111 are flexible loop. Residues D166–K168, R231–F232, D240, R246–K247, A263, and K267 each bind ATP. D240 is a binding site for L-methionine. K271 contacts L-methionine.

This sequence belongs to the AdoMet synthase family. In terms of assembly, homotetramer; dimer of dimers. Mg(2+) serves as cofactor. Requires K(+) as cofactor.

The protein resides in the cytoplasm. The enzyme catalyses L-methionine + ATP + H2O = S-adenosyl-L-methionine + phosphate + diphosphate. The protein operates within amino-acid biosynthesis; S-adenosyl-L-methionine biosynthesis; S-adenosyl-L-methionine from L-methionine: step 1/1. Its function is as follows. Catalyzes the formation of S-adenosylmethionine (AdoMet) from methionine and ATP. The overall synthetic reaction is composed of two sequential steps, AdoMet formation and the subsequent tripolyphosphate hydrolysis which occurs prior to release of AdoMet from the enzyme. The protein is S-adenosylmethionine synthase of Rhodospirillum centenum (strain ATCC 51521 / SW).